Reading from the N-terminus, the 572-residue chain is Pentatricopeptide repeat-containing protein At1g26900, mitochondrial (572 aa).

The transit peptide at 1–117 (MTLAITSRLR…RAFSVFNQLR (117 aa)) directs the protein to the mitochondrion. PPR repeat units follow at residues 89–123 (NLFM…GLTL), 124–158 (DRFS…GFMV), 159–189 (FTDL…MPQS), 191–225 (DAVT…EVVV), 226–260 (NVST…GLDL), 261–291 (DLHL…AIRK), 292–326 (DVVT…KMKP), 327–361 (NSST…RIAL), 362–392 (DAIL…MKDK), 393–427 (DVKS…NCKV), 430–460 (NEIT…MVEA), and 466–496 (KVEH…LPIT). A type E motif region spans residues 501-572 (AWRALLAACR…EAGYSAIEIE (72 aa)).

The protein belongs to the PPR family. PCMP-E subfamily.

The protein localises to the mitochondrion. The polypeptide is Pentatricopeptide repeat-containing protein At1g26900, mitochondrial (PCMP-E54) (Arabidopsis thaliana (Mouse-ear cress)).